A 258-amino-acid polypeptide reads, in one-letter code: Very-long-chain aldehyde decarbonylase GL1-9 (258 aa).

5 consecutive transmembrane segments (helical) span residues 13 to 33, 63 to 83, 88 to 108, 149 to 169, and 175 to 195; these read MGTF…QLVL, GVLL…MVTS, VVVQ…MLVM, PLEG…VSGM, and VFFF…LWLP. One can recognise a Fatty acid hydroxylase domain in the interval 101–237; it reads FLVAMLVMDS…FSIWDRILGT (137 aa).

This sequence belongs to the sterol desaturase family. As to quaternary structure, homodimer.

It is found in the endoplasmic reticulum membrane. The enzyme catalyses a long-chain fatty aldehyde + 2 NADPH + O2 + H(+) = a long-chain alkane + formate + 2 NADP(+) + H2O. Functionally, aldehyde decarbonylase involved in the conversion of aldehydes to alkanes. Core component of a very-long-chain alkane synthesis complex. This is Very-long-chain aldehyde decarbonylase GL1-9 from Oryza sativa subsp. indica (Rice).